Reading from the N-terminus, the 348-residue chain is Phenylalanine--tRNA ligase alpha subunit (348 aa).

Residue Glu259 coordinates Mg(2+).

Belongs to the class-II aminoacyl-tRNA synthetase family. Phe-tRNA synthetase alpha subunit type 1 subfamily. As to quaternary structure, tetramer of two alpha and two beta subunits. Mg(2+) is required as a cofactor.

It localises to the cytoplasm. The catalysed reaction is tRNA(Phe) + L-phenylalanine + ATP = L-phenylalanyl-tRNA(Phe) + AMP + diphosphate + H(+). The protein is Phenylalanine--tRNA ligase alpha subunit of Levilactobacillus brevis (strain ATCC 367 / BCRC 12310 / CIP 105137 / JCM 1170 / LMG 11437 / NCIMB 947 / NCTC 947) (Lactobacillus brevis).